A 504-amino-acid polypeptide reads, in one-letter code: Cytochrome P450 2K1 (504 aa).

Cys447 contributes to the heme binding site.

The protein belongs to the cytochrome P450 family. Requires heme as cofactor.

Its subcellular location is the endoplasmic reticulum membrane. The protein localises to the microsome membrane. It carries out the reaction an organic molecule + reduced [NADPH--hemoprotein reductase] + O2 = an alcohol + oxidized [NADPH--hemoprotein reductase] + H2O + H(+). The chain is Cytochrome P450 2K1 (cyp2k1) from Oncorhynchus mykiss (Rainbow trout).